The sequence spans 307 residues: MQYSTLAGQTDNSLVSNNFGFLRLPLNFMPYESHADWVITGVPYDMAVSGRSGARFGPEAIRRASVNLAWEHRRFPWTFDVRERLNIIDCGDLVFSFGDSRDFVEKMEAHAGKLLSSGKRCLSLGGDHFITLPLLRAHARYFGKLALIHFDAHTDTYDNGSEYDHGTMFYTAPKEGLIDPSRSVQIGIRTEHSKKLPFTVLSAPKVNEDSVEETVRKIKETVGNMPVYLTFDIDCLDPSFAPGTGTPVCGGLSSDRALKILRGLTDLDIVGMDVVEVAPSYDQSDITALAGATIALEMLYLQGAKKD.

Mn(2+) is bound by residues H128, D151, H153, D155, D232, and D234.

The protein belongs to the arginase family. Agmatinase subfamily. Requires Mn(2+) as cofactor.

It carries out the reaction agmatine + H2O = urea + putrescine. It functions in the pathway amine and polyamine biosynthesis; putrescine biosynthesis via agmatine pathway; putrescine from agmatine: step 1/1. Catalyzes the formation of putrescine from agmatine. The polypeptide is Agmatinase (Neisseria meningitidis serogroup A / serotype 4A (strain DSM 15465 / Z2491)).